The sequence spans 296 residues: LysM and putative peptidoglycan-binding domain-containing protein 4 (296 aa).

Residues 1-217 (MRHKELLSKT…PMDGADCGIQ (217 aa)) lie on the Extracellular side of the membrane. Asn-30 is a glycosylation site (N-linked (GlcNAc...) asparagine). The LysM domain maps to 74 to 118 (LQRELAQEDSLNKLALQYGCKVADIKKVNNFIREQDLYALKSIKS). Residues 218-238 (WWNAVFIMLLIGIVLPIFYLV) form a helical membrane-spanning segment. At 239–296 (YFKIQASGETPNSLNTAAIPNGSMAMGTVPGQAPRLAVAVPTVPSADSQFSQTTQAGN) the chain is on the cytoplasmic side.

It localises to the membrane. This chain is LysM and putative peptidoglycan-binding domain-containing protein 4 (LYSMD4), found in Pongo abelii (Sumatran orangutan).